Here is a 123-residue protein sequence, read N- to C-terminus: Dormancy-associated protein homolog 4 (123 aa).

Positions 7-86 (LWDETVAGPT…NPGTPLTPGT (80 aa)) are disordered. The span at 30–46 (LSTVRSSPPSLSSDQVT) shows a compositional bias: low complexity. 2 stretches are compositionally biased toward polar residues: residues 47–58 (RSIMVTKGNNNV) and 71–80 (PTCSSSNPGT). Ser74 bears the Phosphoserine mark.

This sequence belongs to the DRM1/ARP family.

The protein is Dormancy-associated protein homolog 4 of Arabidopsis thaliana (Mouse-ear cress).